The sequence spans 115 residues: 5-hydroxyisourate hydrolase (115 aa).

The segment at 1-23 (MSGLTTHILDQASGKPAAGVGVR) is disordered. 3 residues coordinate substrate: H7, R45, and Y112.

It belongs to the transthyretin family. 5-hydroxyisourate hydrolase subfamily. As to quaternary structure, homotetramer.

The catalysed reaction is 5-hydroxyisourate + H2O = 5-hydroxy-2-oxo-4-ureido-2,5-dihydro-1H-imidazole-5-carboxylate + H(+). Its function is as follows. Catalyzes the hydrolysis of 5-hydroxyisourate (HIU) to 2-oxo-4-hydroxy-4-carboxy-5-ureidoimidazoline (OHCU). In Caulobacter vibrioides (strain ATCC 19089 / CIP 103742 / CB 15) (Caulobacter crescentus), this protein is 5-hydroxyisourate hydrolase.